The following is a 161-amino-acid chain: Phosphopantetheine adenylyltransferase (161 aa).

Thr10 is a substrate binding site. Residues 10–11 (TF) and His18 each bind ATP. Residues Lys42, Leu74, and Arg88 each contribute to the substrate site. Residues 89–91 (GLR), Glu99, and 124–130 (NAFISSS) each bind ATP.

The protein belongs to the bacterial CoaD family. In terms of assembly, homohexamer. Requires Mg(2+) as cofactor.

The protein localises to the cytoplasm. It carries out the reaction (R)-4'-phosphopantetheine + ATP + H(+) = 3'-dephospho-CoA + diphosphate. Its pathway is cofactor biosynthesis; coenzyme A biosynthesis; CoA from (R)-pantothenate: step 4/5. In terms of biological role, reversibly transfers an adenylyl group from ATP to 4'-phosphopantetheine, yielding dephospho-CoA (dPCoA) and pyrophosphate. In Wolinella succinogenes (strain ATCC 29543 / DSM 1740 / CCUG 13145 / JCM 31913 / LMG 7466 / NCTC 11488 / FDC 602W) (Vibrio succinogenes), this protein is Phosphopantetheine adenylyltransferase.